A 757-amino-acid polypeptide reads, in one-letter code: Polyribonucleotide nucleotidyltransferase (757 aa).

2 residues coordinate Mg(2+): Asp488 and Asp494. One can recognise a KH domain in the interval 555 to 614 (PKLYTMKINAEKIRDVIGKGGAVIRALTEETGCQINIEEDGTITIAATDAAKADIAKRRI). The region spanning 624 to 692 (GKIYEGPVTK…ERGRVKLSMK (69 aa)) is the S1 motif domain. A disordered region spans residues 693–757 (VLAERPAPGS…ADTGSGQRVG (65 aa)). The segment covering 720 to 736 (ALAEREPRREMRDHGHP) has biased composition (basic and acidic residues). Over residues 737-747 (PSEQQQQQSPP) the composition is skewed to low complexity.

This sequence belongs to the polyribonucleotide nucleotidyltransferase family. It depends on Mg(2+) as a cofactor.

It localises to the cytoplasm. It catalyses the reaction RNA(n+1) + phosphate = RNA(n) + a ribonucleoside 5'-diphosphate. In terms of biological role, involved in mRNA degradation. Catalyzes the phosphorolysis of single-stranded polyribonucleotides processively in the 3'- to 5'-direction. The protein is Polyribonucleotide nucleotidyltransferase of Verminephrobacter eiseniae (strain EF01-2).